A 453-amino-acid polypeptide reads, in one-letter code: Jacalin-related lectin 40 (453 aa).

3 consecutive Jacalin-type lectin domains span residues 1-142 (MAQK…YFTT), 154-296 (HIKL…YFSS), and 306-449 (PEKL…YVVP). Ala2 bears the N-acetylalanine mark.

This sequence belongs to the jacalin lectin family. As to expression, expressed in roots.

This is Jacalin-related lectin 40 (JAL40) from Arabidopsis thaliana (Mouse-ear cress).